A 201-amino-acid polypeptide reads, in one-letter code: uncharacterized protein (201 aa).

The interval 121-141 is disordered; that stretch reads HHRTRPGRGPGPRPGGSAMAG.

This is an uncharacterized protein from Mycobacterium tuberculosis (strain ATCC 25618 / H37Rv).